Consider the following 309-residue polypeptide: Malate dehydrogenase (309 aa).

Residues 9-14 (GAGAVG) and Asp33 each bind NAD(+). Substrate contacts are provided by Arg82 and Arg88. NAD(+) is bound by residues Asn95 and 118–120 (VTN). Substrate-binding residues include Asn120 and Arg151. The active-site Proton acceptor is His175.

The protein belongs to the LDH/MDH superfamily. MDH type 3 family.

The enzyme catalyses (S)-malate + NAD(+) = oxaloacetate + NADH + H(+). Its function is as follows. Catalyzes the reversible oxidation of malate to oxaloacetate. This chain is Malate dehydrogenase, found in Thermomicrobium roseum (strain ATCC 27502 / DSM 5159 / P-2).